Consider the following 474-residue polypeptide: Polyamine oxidase 7 (474 aa).

The signal sequence occupies residues 1–27; sequence MTKPTTMAIFLSIVLLSMAQLPSLVAG. Glutamate 61 and arginine 69 together coordinate FAD. Asparagine 103 and asparagine 150 each carry an N-linked (GlcNAc...) asparagine glycan. Valine 261 lines the FAD pocket. The N-linked (GlcNAc...) asparagine glycan is linked to asparagine 278. Glutamate 454 is an FAD binding site.

It belongs to the flavin monoamine oxidase family. FAD is required as a cofactor.

It localises to the secreted. The protein resides in the extracellular space. It is found in the apoplast. It catalyses the reaction spermine + O2 + H2O = 3-aminopropanal + spermidine + H2O2. The enzyme catalyses N(1)-acetylspermine + O2 + H2O = 3-acetamidopropanal + spermidine + H2O2. The catalysed reaction is norspermine + O2 + H2O = norspermidine + 3-aminopropanal + H2O2. It carries out the reaction spermidine + O2 + H2O = 3-aminopropanal + putrescine + H2O2. It catalyses the reaction N(1)-acetylspermidine + O2 + H2O = 3-acetamidopropanal + putrescine + H2O2. The enzyme catalyses thermospermine + O2 + H2O = 3-aminopropanal + spermidine + H2O2. Its pathway is amine and polyamine degradation; spermidine degradation. The protein operates within amine and polyamine degradation; spermine degradation. Functionally, flavoenzyme involved in polyamine back-conversion. Catalyzes the oxidation of the secondary amino group of polyamines, such as spermine, spermidine and their acetyl derivatives. Substrate preference is spermine &gt; spermidine &gt; N(1)-acetylspermine &gt; N(1)-acetylspermidine &gt; norspermine &gt; thermospermine. No activity detected when putrescine is used as substrate. May play a role in producing hydrogen peroxide for secondary wall thickening through lignin formation during anther development. The protein is Polyamine oxidase 7 of Oryza sativa subsp. japonica (Rice).